The following is a 451-amino-acid chain: Bifunctional protein GlmU (451 aa).

Positions 1–226 (MVAVAILAAG…YLEISGINDR (226 aa)) are pyrophosphorylase. UDP-N-acetyl-alpha-D-glucosamine-binding positions include 7 to 10 (LAAG), Lys-21, Gln-73, and 78 to 79 (GT). Asp-103 is a binding site for Mg(2+). 4 residues coordinate UDP-N-acetyl-alpha-D-glucosamine: Gly-140, Glu-155, Asn-170, and Asn-224. Asn-224 serves as a coordination point for Mg(2+). Positions 227-247 (KQLATAYDILQNRIKDYWMRA) are linker. Positions 248-451 (GVTLIDPDSI…ISGWRMKTDD (204 aa)) are N-acetyltransferase. UDP-N-acetyl-alpha-D-glucosamine contacts are provided by Arg-329 and Lys-347. His-359 acts as the Proton acceptor in catalysis. 2 residues coordinate UDP-N-acetyl-alpha-D-glucosamine: Tyr-362 and Asn-373. Acetyl-CoA-binding positions include Ala-376, 382 to 383 (NY), Ala-419, and Arg-436.

It in the N-terminal section; belongs to the N-acetylglucosamine-1-phosphate uridyltransferase family. This sequence in the C-terminal section; belongs to the transferase hexapeptide repeat family. As to quaternary structure, homotrimer. The cofactor is Mg(2+).

The protein resides in the cytoplasm. It catalyses the reaction alpha-D-glucosamine 1-phosphate + acetyl-CoA = N-acetyl-alpha-D-glucosamine 1-phosphate + CoA + H(+). It carries out the reaction N-acetyl-alpha-D-glucosamine 1-phosphate + UTP + H(+) = UDP-N-acetyl-alpha-D-glucosamine + diphosphate. It functions in the pathway nucleotide-sugar biosynthesis; UDP-N-acetyl-alpha-D-glucosamine biosynthesis; N-acetyl-alpha-D-glucosamine 1-phosphate from alpha-D-glucosamine 6-phosphate (route II): step 2/2. Its pathway is nucleotide-sugar biosynthesis; UDP-N-acetyl-alpha-D-glucosamine biosynthesis; UDP-N-acetyl-alpha-D-glucosamine from N-acetyl-alpha-D-glucosamine 1-phosphate: step 1/1. The protein operates within bacterial outer membrane biogenesis; LPS lipid A biosynthesis. Catalyzes the last two sequential reactions in the de novo biosynthetic pathway for UDP-N-acetylglucosamine (UDP-GlcNAc). The C-terminal domain catalyzes the transfer of acetyl group from acetyl coenzyme A to glucosamine-1-phosphate (GlcN-1-P) to produce N-acetylglucosamine-1-phosphate (GlcNAc-1-P), which is converted into UDP-GlcNAc by the transfer of uridine 5-monophosphate (from uridine 5-triphosphate), a reaction catalyzed by the N-terminal domain. In Gloeothece citriformis (strain PCC 7424) (Cyanothece sp. (strain PCC 7424)), this protein is Bifunctional protein GlmU.